A 750-amino-acid chain; its full sequence is Photosystem I P700 chlorophyll a apoprotein A1 (750 aa).

The next 8 helical transmembrane spans lie at 70–93, 156–179, 195–219, 291–309, 346–369, 385–411, 433–455, and 531–549; these read VFSA…FHGA, LYCT…FHYH, LNHH…HVSL, IAHH…GHMY, WHAQ…HHMY, LSLF…IFMV, AIIS…LYIH, and FLVH…LILL. Cysteine 573 and cysteine 582 together coordinate [4Fe-4S] cluster. The next 2 helical transmembrane spans lie at 589 to 610 and 664 to 686; these read HVFL…HFSW and LSAY…MFLF. Histidine 675 provides a ligand contact to chlorophyll a'. Chlorophyll a is bound by residues methionine 683 and tyrosine 691. Residue tryptophan 692 coordinates phylloquinone. The helical transmembrane segment at 724-744 threads the bilayer; that stretch reads AVGVTHYLLGGIATTWAFFLA.

It belongs to the PsaA/PsaB family. In terms of assembly, the PsaA/B heterodimer binds the P700 chlorophyll special pair and subsequent electron acceptors. PSI consists of a core antenna complex that captures photons, and an electron transfer chain that converts photonic excitation into a charge separation. The eukaryotic PSI reaction center is composed of at least 11 subunits. It depends on P700 is a chlorophyll a/chlorophyll a' dimer, A0 is one or more chlorophyll a, A1 is one or both phylloquinones and FX is a shared 4Fe-4S iron-sulfur center. as a cofactor.

It is found in the plastid. The protein resides in the chloroplast thylakoid membrane. It carries out the reaction reduced [plastocyanin] + hnu + oxidized [2Fe-2S]-[ferredoxin] = oxidized [plastocyanin] + reduced [2Fe-2S]-[ferredoxin]. Its function is as follows. PsaA and PsaB bind P700, the primary electron donor of photosystem I (PSI), as well as the electron acceptors A0, A1 and FX. PSI is a plastocyanin-ferredoxin oxidoreductase, converting photonic excitation into a charge separation, which transfers an electron from the donor P700 chlorophyll pair to the spectroscopically characterized acceptors A0, A1, FX, FA and FB in turn. Oxidized P700 is reduced on the lumenal side of the thylakoid membrane by plastocyanin. This Coffea arabica (Arabian coffee) protein is Photosystem I P700 chlorophyll a apoprotein A1.